The sequence spans 270 residues: Putative [LysW]-aminoadipate/[LysW]-glutamate kinase (270 aa).

Substrate-binding positions include 42 to 43, R69, and N177; that span reads GG.

This sequence belongs to the acetylglutamate kinase family. LysZ subfamily.

It is found in the cytoplasm. It carries out the reaction [amino-group carrier protein]-C-terminal-N-(1,4-dicarboxybutan-1-yl)-L-glutamine + ATP = [amino-group carrier protein]-C-terminal-N-(1-carboxy-5-phosphooxy-5-oxopentan-1-yl)-L-glutamine + ADP. It catalyses the reaction [amino-group carrier protein]-C-terminal-gamma-(L-glutamyl)-L-glutamate + ATP = [amino-group carrier protein]-C-terminal-gamma-(5-phospho-L-glutamyl)-L-glutamate + ADP. It functions in the pathway amino-acid biosynthesis; L-lysine biosynthesis via AAA pathway; L-lysine from L-alpha-aminoadipate (Thermus route): step 2/5. The protein operates within amino-acid biosynthesis; L-arginine biosynthesis. In terms of biological role, involved in both the arginine and lysine biosynthetic pathways. Phosphorylates the LysW-bound precursors glutamate (for arginine biosynthesis), respectively alpha-aminoadipate (for lysine biosynthesis). This Aeropyrum pernix (strain ATCC 700893 / DSM 11879 / JCM 9820 / NBRC 100138 / K1) protein is Putative [LysW]-aminoadipate/[LysW]-glutamate kinase.